The chain runs to 239 residues: MTIYLPELIPSHSTVFPNIENALNNPDGLLIMGGDLSSAQLISAYQHGIFPWYSDGDPILWWSPSVRGVFFPEQFSPSKSLKKFFRKSNYNVTLNKATYQVIDLCASTRPKEETWIMPEMIKAYKTLVDLGYCHSVEVWNDNELIGGLYGLQIGQVFCGESMFSLQTNASKIALWKFCEHFVSSNGKLIDCQMMNPHLESLGAQEMKRSDFKTLLEELHVKPTSSDCYLAQTLGGSSFS.

It belongs to the L/F-transferase family.

It localises to the cytoplasm. It catalyses the reaction N-terminal L-lysyl-[protein] + L-leucyl-tRNA(Leu) = N-terminal L-leucyl-L-lysyl-[protein] + tRNA(Leu) + H(+). It carries out the reaction N-terminal L-arginyl-[protein] + L-leucyl-tRNA(Leu) = N-terminal L-leucyl-L-arginyl-[protein] + tRNA(Leu) + H(+). The catalysed reaction is L-phenylalanyl-tRNA(Phe) + an N-terminal L-alpha-aminoacyl-[protein] = an N-terminal L-phenylalanyl-L-alpha-aminoacyl-[protein] + tRNA(Phe). Functionally, functions in the N-end rule pathway of protein degradation where it conjugates Leu, Phe and, less efficiently, Met from aminoacyl-tRNAs to the N-termini of proteins containing an N-terminal arginine or lysine. The protein is Leucyl/phenylalanyl-tRNA--protein transferase of Aliivibrio fischeri (strain MJ11) (Vibrio fischeri).